The chain runs to 203 residues: MMQDVSSSPVSPADDSLSNSEEEPDRQQPQSGKRGGRKRRSSRRSAGGGAGPGGAAGGGVGGGDEPGSPAQGKRGKKSAGCGGGGGSAGGGGGSSSGGGSPQSYEELQTQRVMANVRGRQRTQSLNEAFAALRKIIPTLPSDKLSKIQTLKLAARYIDFLYQVLQSDELDSKMASCSYVAHERLSYAFSVWRMEGAWSMSASH.

Positions 1 to 18 (MMQDVSSSPVSPADDSLS) are enriched in low complexity. The disordered stretch occupies residues 1–105 (MMQDVSSSPV…SGGGSPQSYE (105 aa)). The span at 34 to 43 (RGGRKRRSSR) shows a compositional bias: basic residues. 2 stretches are compositionally biased toward gly residues: residues 46–65 (AGGG…GGDE) and 80–100 (GCGG…GGGS). The bHLH domain maps to 109-160 (TQRVMANVRGRQRTQSLNEAFAALRKIIPTLPSDKLSKIQTLKLAARYIDFL). The tract at residues 162–192 (QVLQSDELDSKMASCSYVAHERLSYAFSVWR) is sufficient for transactivation activity.

In terms of assembly, efficient DNA binding requires dimerization with another bHLH protein. Homodimer or heterodimer with E proteins such as TCF3. ID1 binds preferentially to TCF3 but does not interact efficiently with TWIST1 so ID1 levels control the amount of TCF3 available to dimerize with TWIST and thus determine the type of dimer formed.

The protein localises to the nucleus. Functionally, acts as a transcriptional regulator. Inhibits myogenesis by sequestrating E proteins, inhibiting trans-activation by MEF2, and inhibiting DNA-binding by MYOD1 through physical interaction. This interaction probably involves the basic domains of both proteins. Also represses expression of pro-inflammatory cytokines such as TNFA and IL1B. Regulates cranial suture patterning and fusion. Activates transcription as a heterodimer with E proteins. Regulates gene expression differentially, depending on dimer composition. Homodimers induce expression of FGFR2 and POSTN while heterodimers repress FGFR2 and POSTN expression and induce THBS1 expression. Heterodimerization is also required for osteoblast differentiation. Represses the activity of the circadian transcriptional activator: NPAS2-BMAL1 heterodimer. This Callithrix jacchus (White-tufted-ear marmoset) protein is Twist-related protein 1 (TWIST1).